A 246-amino-acid chain; its full sequence is CTD nuclear envelope phosphatase 1 homolog (246 aa).

A helical transmembrane segment spans residues 3–23 (TIAQSVFCFLAGFFNFFLLYF). The region spanning 53-220 (LTVKRKILVL…LNLLPFLDAL (168 aa)) is the FCP1 homology domain.

This sequence belongs to the dullard family.

It is found in the membrane. Its subcellular location is the nucleus envelope. It catalyses the reaction O-phospho-L-seryl-[protein] + H2O = L-seryl-[protein] + phosphate. The catalysed reaction is O-phospho-L-threonyl-[protein] + H2O = L-threonyl-[protein] + phosphate. Its function is as follows. Serine/threonine protein phosphatase that may dephosphorylate and activate lipin-like phosphatases. Lipins are phosphatidate phosphatases that catalyze the conversion of phosphatidic acid to diacylglycerol and control the metabolism of fatty acids at different levels. May indirectly modulate the lipid composition of nuclear and/or endoplasmic reticulum membranes and be required for proper nuclear membrane morphology and/or dynamics. Contributes to closure of nuclear envelope (NE) holes and prevents excess nuclear membranes after meiosis and mitosis, possibly through spatial regulation of lipin. May limit the production of endoplasmic reticulum (ER) sheets proximal to the NE to prevent the ER membranes that feed into NE openings from invading the nuclear interior and thereby restrict nuclear transport to nuclear pore complexes (NPCs). May also indirectly regulate the production of lipid droplets and triacylglycerol. This is CTD nuclear envelope phosphatase 1 homolog (cnep-1) from Caenorhabditis elegans.